We begin with the raw amino-acid sequence, 300 residues long: uncharacterized protein (300 aa).

Residues 1-19 (MATKRAHPEDETHESKRAA) show a composition bias toward basic and acidic residues. A disordered region spans residues 1 to 20 (MATKRAHPEDETHESKRAAQ).

This is an uncharacterized protein from Orgyia pseudotsugata multicapsid polyhedrosis virus (OpMNPV).